Consider the following 320-residue polypeptide: UDP-3-O-acyl-N-acetylglucosamine deacetylase (320 aa).

His-92, His-251, and Asp-255 together coordinate Zn(2+). His-278 serves as the catalytic Proton donor.

It belongs to the LpxC family. It depends on Zn(2+) as a cofactor.

The catalysed reaction is a UDP-3-O-[(3R)-3-hydroxyacyl]-N-acetyl-alpha-D-glucosamine + H2O = a UDP-3-O-[(3R)-3-hydroxyacyl]-alpha-D-glucosamine + acetate. It participates in glycolipid biosynthesis; lipid IV(A) biosynthesis; lipid IV(A) from (3R)-3-hydroxytetradecanoyl-[acyl-carrier-protein] and UDP-N-acetyl-alpha-D-glucosamine: step 2/6. In terms of biological role, catalyzes the hydrolysis of UDP-3-O-myristoyl-N-acetylglucosamine to form UDP-3-O-myristoylglucosamine and acetate, the committed step in lipid A biosynthesis. This is UDP-3-O-acyl-N-acetylglucosamine deacetylase from Psychrobacter cryohalolentis (strain ATCC BAA-1226 / DSM 17306 / VKM B-2378 / K5).